The chain runs to 406 residues: Proteasome-activating nucleotidase 1 (406 aa).

Residues 13–72 adopt a coiled-coil conformation; sequence YDKDSASQQEKITALQERLEVLETQNEEMRDKLLDTNAENNKYQQKLERLTHENKKLKQS. ATP is bound by residues 194–199 and histidine 333; that span reads GTGKTM. The tract at residues 404–406 is docks into pockets in the proteasome alpha-ring to cause gate opening; the sequence is AFA.

Belongs to the AAA ATPase family. In terms of assembly, homododecamer, in a proposed two stacked hexameric ring configuration, but may also form homohexamer. The hexameric complex has likely a two-ring architecture resembling a top hat that caps the 20S proteasome core at one or both ends. Upon ATP-binding, the C-terminus of PAN probably interacts with the alpha-rings of the proteasome core by binding to the intersubunit pockets. Interacts with SAMP1-MoaE conjugate in vitro, but does not bind to SAMP1 or MoaE alone. Interacts with NcsA.

The protein resides in the cytoplasm. With respect to regulation, ATPase activity is inhibited by EDTA in vitro. Functionally, ATPase which is responsible for recognizing, binding, unfolding and translocation of substrate proteins into the archaeal 20S proteasome core particle. Is essential for opening the gate of the 20S proteasome via an interaction with its C-terminus, thereby allowing substrate entry and access to the site of proteolysis. Thus, the C-terminus of the proteasomal ATPase functions like a 'key in a lock' to induce gate opening and therefore regulate proteolysis. Unfolding activity requires energy from ATP hydrolysis, whereas ATP binding alone promotes ATPase-20S proteasome association which triggers gate opening, and supports translocation of unfolded substrates. Is also able to cleave other nucleoside triphosphates including GTP and TTP, but the rate of hydrolysis is 4- to 5-fold slower than for ATP. The chain is Proteasome-activating nucleotidase 1 from Haloferax volcanii (strain ATCC 29605 / DSM 3757 / JCM 8879 / NBRC 14742 / NCIMB 2012 / VKM B-1768 / DS2) (Halobacterium volcanii).